A 333-amino-acid polypeptide reads, in one-letter code: Glycerol-3-phosphate dehydrogenase [NAD(P)+] (333 aa).

NADPH is bound by residues tryptophan 12, lysine 33, and lysine 105. Residues lysine 105, glycine 136, and serine 138 each coordinate sn-glycerol 3-phosphate. Alanine 140 is a binding site for NADPH. Lysine 191, aspartate 244, serine 254, arginine 255, and asparagine 256 together coordinate sn-glycerol 3-phosphate. The Proton acceptor role is filled by lysine 191. Residue arginine 255 coordinates NADPH. Residues valine 279 and glutamate 281 each coordinate NADPH.

Belongs to the NAD-dependent glycerol-3-phosphate dehydrogenase family.

Its subcellular location is the cytoplasm. It catalyses the reaction sn-glycerol 3-phosphate + NAD(+) = dihydroxyacetone phosphate + NADH + H(+). It carries out the reaction sn-glycerol 3-phosphate + NADP(+) = dihydroxyacetone phosphate + NADPH + H(+). Its pathway is membrane lipid metabolism; glycerophospholipid metabolism. Functionally, catalyzes the reduction of the glycolytic intermediate dihydroxyacetone phosphate (DHAP) to sn-glycerol 3-phosphate (G3P), the key precursor for phospholipid synthesis. The polypeptide is Glycerol-3-phosphate dehydrogenase [NAD(P)+] (Protochlamydia amoebophila (strain UWE25)).